Reading from the N-terminus, the 205-residue chain is Glycerol-3-phosphate acyltransferase (205 aa).

Transmembrane regions (helical) follow at residues 5–25 (LIAT…YIIA), 56–76 (ICVL…AIAL), 84–104 (VPAL…YFGF), 114–134 (IGVV…VAIL), 144–164 (LGSL…LPFF), and 165–185 (HYPL…LWRH).

The protein belongs to the PlsY family. Probably interacts with PlsX.

It is found in the cell membrane. It carries out the reaction an acyl phosphate + sn-glycerol 3-phosphate = a 1-acyl-sn-glycero-3-phosphate + phosphate. It participates in lipid metabolism; phospholipid metabolism. Functionally, catalyzes the transfer of an acyl group from acyl-phosphate (acyl-PO(4)) to glycerol-3-phosphate (G3P) to form lysophosphatidic acid (LPA). This enzyme utilizes acyl-phosphate as fatty acyl donor, but not acyl-CoA or acyl-ACP. The polypeptide is Glycerol-3-phosphate acyltransferase (Shouchella clausii (strain KSM-K16) (Alkalihalobacillus clausii)).